Here is a 529-residue protein sequence, read N- to C-terminus: Mannuronan C5-epimerase (529 aa).

The N-terminal stretch at 1–30 (MGACAMNPQALKGSAMLAAAMLLASGAAMA) is a signal peptide. PbH1 repeat units follow at residues 229–256 (GTET…SISQ), 291–313 (TTGF…DPHD), 315–338 (SHGL…IISR), 340–362 (VNDS…VLDR), 364–386 (SVNN…TLYE), and 387–409 (SGDN…RVRN). The Proton acceptor role is filled by H312.

It belongs to the D-mannuronate C5-epimerase family.

Its subcellular location is the periplasm. It carries out the reaction [(1-&gt;4)-beta-D-mannuronosyl](n) = [alginate](n). Its pathway is glycan biosynthesis; alginate biosynthesis. Catalyzes the epimerization of beta-D-mannuronate to alpha-L-guluronate during the synthesis of the linear polysaccharide alginate. In addition, is part of a periplasmic protein complex that protects alginate from degradation by AlgL by channeling the newly formed alginate polymer through a scaffold that transfers the alginate polymer through the periplasmic space to the outer membrane secretin AlgE. The sequence is that of Mannuronan C5-epimerase from Pseudomonas fluorescens.